Reading from the N-terminus, the 185-residue chain is Pyruvate/ketoisovalerate oxidoreductases common subunit gamma (185 aa).

Heterotetramer of one alpha, one beta, one delta and one gamma chain.

The enzyme catalyses 2 oxidized [2Fe-2S]-[ferredoxin] + pyruvate + CoA = 2 reduced [2Fe-2S]-[ferredoxin] + acetyl-CoA + CO2 + H(+). It carries out the reaction 3-methyl-2-oxobutanoate + 2 oxidized [2Fe-2S]-[ferredoxin] + CoA = 2-methylpropanoyl-CoA + 2 reduced [2Fe-2S]-[ferredoxin] + CO2 + H(+). This Thermococcus litoralis (strain ATCC 51850 / DSM 5473 / JCM 8560 / NS-C) protein is Pyruvate/ketoisovalerate oxidoreductases common subunit gamma (porG).